The sequence spans 497 residues: Glycerol kinase (497 aa).

Thr-11 lines the ADP pocket. ATP contacts are provided by Thr-11, Thr-12, and Ser-13. Residue Thr-11 coordinates sn-glycerol 3-phosphate. Arg-15 serves as a coordination point for ADP. 4 residues coordinate sn-glycerol 3-phosphate: Arg-81, Glu-82, Tyr-133, and Asp-242. Positions 81, 82, 133, 242, and 243 each coordinate glycerol. 2 residues coordinate ADP: Thr-264 and Gly-306. The ATP site is built by Thr-264, Gly-306, Gln-310, and Gly-407. 2 residues coordinate ADP: Gly-407 and Asn-411.

Belongs to the FGGY kinase family.

It catalyses the reaction glycerol + ATP = sn-glycerol 3-phosphate + ADP + H(+). Its pathway is polyol metabolism; glycerol degradation via glycerol kinase pathway; sn-glycerol 3-phosphate from glycerol: step 1/1. Its activity is regulated as follows. Inhibited by fructose 1,6-bisphosphate (FBP). Its function is as follows. Key enzyme in the regulation of glycerol uptake and metabolism. Catalyzes the phosphorylation of glycerol to yield sn-glycerol 3-phosphate. The chain is Glycerol kinase from Alcanivorax borkumensis (strain ATCC 700651 / DSM 11573 / NCIMB 13689 / SK2).